The primary structure comprises 285 residues: Probable endonuclease 4 (285 aa).

His69, His109, Glu145, Asp179, His182, His216, Asp229, His231, and Glu261 together coordinate Zn(2+).

The protein belongs to the AP endonuclease 2 family. It depends on Zn(2+) as a cofactor.

It catalyses the reaction Endonucleolytic cleavage to 5'-phosphooligonucleotide end-products.. Endonuclease IV plays a role in DNA repair. It cleaves phosphodiester bonds at apurinic or apyrimidinic (AP) sites, generating a 3'-hydroxyl group and a 5'-terminal sugar phosphate. The protein is Probable endonuclease 4 of Shigella dysenteriae serotype 1 (strain Sd197).